A 297-amino-acid polypeptide reads, in one-letter code: Phosphoribosylaminoimidazole-succinocarboxamide synthase (297 aa).

It belongs to the SAICAR synthetase family.

It carries out the reaction 5-amino-1-(5-phospho-D-ribosyl)imidazole-4-carboxylate + L-aspartate + ATP = (2S)-2-[5-amino-1-(5-phospho-beta-D-ribosyl)imidazole-4-carboxamido]succinate + ADP + phosphate + 2 H(+). It participates in purine metabolism; IMP biosynthesis via de novo pathway; 5-amino-1-(5-phospho-D-ribosyl)imidazole-4-carboxamide from 5-amino-1-(5-phospho-D-ribosyl)imidazole-4-carboxylate: step 1/2. This is Phosphoribosylaminoimidazole-succinocarboxamide synthase from Corynebacterium urealyticum (strain ATCC 43042 / DSM 7109).